The primary structure comprises 824 residues: MNEPMSLFDDLPEEHDEPQEAPERRLPMVVLGEMVIMPHMTIPLQVPQGKSYRAMERAWEEDRDVLLIFVREHQLEGYKSNQPQNLPPIGVIAQLQEFAKLNDGTARVILEGQSRAQIIEAIQITPFYRVRCRPYTDPPVSGLEVEALMETVKQQVDEFVEHLGEVPQEAVQFVHRIDRPGHLADIVTWGPAFDFKDRLEVLNTLDPVERLRKVYLVLARQLELLKLRVKIQQDTKEVLDQSQREYFLREQLRIIRRELGEDEEGDDPIDELRRKIHELDAPEYVKNQALHELKRLAQQGMNNPESGVIRTYLDWILSLPWADEELPEISITEAQKVLDADHYGLEKVKERILEYLAVRKLAGDKMRSPILCFVGPPGVGKTSLGRSIARALGRKFVRTSLGGVRDEAEIRGHRRTYIGAMPGRIIQAMKNAKSKSPVYILDEVDKIGLDFRGDPTSALLEVLDPEQNNAFSDHYLEIPFDLSKVIFIATANQLDPIPLPLRDRMEIIEIGGYTEDEKLEIARGFLIPKQREFHGLTEDQIEFTEGAILKLIREYTREAGVRGLEREIASLCRKVARQVAEQTEANGELPPKFVIDEAAVVKYLGPERYTYGIAEEQDEVGVATGVAWTSAGGDILSIEVLPFKGKGQLQLTGQLGEVMKESAQTAVSYVRSRAADFGIDPNTFEETNIHIHIPEGAVPKDDPSAGITLTTALISALTGTPVRRDVAMTGEVTLRGKVLPIGGLKEKTLAAHRAGIRTFILPKENAKDISELPEKVRRELNLIPVSSMDEVLRIALSRMPTPANNQNGSHTNNRGQPSPAPAGT.

The segment at 1–23 is disordered; it reads MNEPMSLFDDLPEEHDEPQEAPE. Over residues 10-20 the composition is skewed to acidic residues; that stretch reads DLPEEHDEPQE. One can recognise a Lon N-terminal domain in the interval 26-222; it reads LPMVVLGEMV…KVYLVLARQL (197 aa). Residue 375–382 participates in ATP binding; the sequence is GPPGVGKT. Positions 617–798 constitute a Lon proteolytic domain; it reads QDEVGVATGV…DEVLRIALSR (182 aa). Catalysis depends on residues Ser704 and Lys747. The disordered stretch occupies residues 800-824; the sequence is PTPANNQNGSHTNNRGQPSPAPAGT. Positions 802–816 are enriched in polar residues; that stretch reads PANNQNGSHTNNRGQ.

It belongs to the peptidase S16 family. Homohexamer. Organized in a ring with a central cavity.

Its subcellular location is the cytoplasm. It carries out the reaction Hydrolysis of proteins in presence of ATP.. In terms of biological role, ATP-dependent serine protease that mediates the selective degradation of mutant and abnormal proteins as well as certain short-lived regulatory proteins. Required for cellular homeostasis and for survival from DNA damage and developmental changes induced by stress. Degrades polypeptides processively to yield small peptide fragments that are 5 to 10 amino acids long. Binds to DNA in a double-stranded, site-specific manner. This Chloroflexus aggregans (strain MD-66 / DSM 9485) protein is Lon protease.